Here is a 171-residue protein sequence, read N- to C-terminus: Glutathione peroxidase-like peroxiredoxin GPX3 (171 aa).

Residue cysteine 43 is the Cysteine sulfenic acid (-SOH) intermediate of the active site. Cysteine 43 and cysteine 89 form a disulfide bridge.

It belongs to the glutathione peroxidase family. In terms of assembly, interacts with CAP1 and probably YBP1.

The enzyme catalyses a hydroperoxide + [thioredoxin]-dithiol = an alcohol + [thioredoxin]-disulfide + H2O. Functionally, involved in oxidative stress response and redox homeostasis. Functions as a sensor and transducer of hydroperoxide stress. In response to hydroperoxide stress it oxidizes (activates) the transcription activator CAP1, which is involved in transcription activation of genes of the oxidative stress response pathway. May also play a direct role in hydroperoxide scavenging. The enzyme is not required for the glutaredoxin-mediated antioxidant function. In the presence of peroxides, GPX3 is directly oxidized at Cys-43 to form a cysteine sulfenic acid (-SOH). Cys-43-SOH then forms either an intramolecular disulfide bond (Cys-43 with Cys-89) or a transient, intermolecular disulfide bond with 'Cys-446' of CAP1, which is further resolved into a CAP1 intramolecular disulfide bond ('Cys-303' with 'Cys-598'), which causes its nuclear accumulation and activation, and a reduced Cys-43 in GPX3. Required for C.albicans-mediated macrophage killing. The polypeptide is Glutathione peroxidase-like peroxiredoxin GPX3 (Candida albicans (strain SC5314 / ATCC MYA-2876) (Yeast)).